A 181-amino-acid chain; its full sequence is Trafficking protein particle complex subunit 3 homolog (181 aa).

Residue C70 is the site of S-palmitoyl cysteine attachment.

It belongs to the TRAPP small subunits family. BET3 subfamily. As to quaternary structure, homodimer. Part of the multisubunit TRAPP (transport protein particle) complex.

The protein resides in the golgi apparatus. The protein localises to the cis-Golgi network. It is found in the endoplasmic reticulum. May play a role in vesicular transport from endoplasmic reticulum to Golgi. Required for the systemic spread of the RNAi response. The protein is Trafficking protein particle complex subunit 3 homolog of Caenorhabditis briggsae.